Here is a 267-residue protein sequence, read N- to C-terminus: Chaperone protein MyfB (267 aa).

An N-terminal signal peptide occupies residues 1 to 34 (MKYKFSHNFISYNLFLFVFMSLILLPYSHASSMG). Cys-127 and Cys-164 are disulfide-bonded.

Belongs to the periplasmic pilus chaperone family.

It is found in the periplasm. In terms of biological role, required for the biogenesis of the MyfA fimbria. The polypeptide is Chaperone protein MyfB (myfB) (Yersinia enterocolitica).